We begin with the raw amino-acid sequence, 401 residues long: Canavanine gamma-lyase (401 aa).

K214 bears the N6-(pyridoxal phosphate)lysine mark.

Belongs to the trans-sulfuration enzymes family. Requires pyridoxal 5'-phosphate as cofactor.

The enzyme catalyses L-canavanine + H2O = N-hydroxyguanidine + L-homoserine. In terms of biological role, lyase involved in the degradation of canavanine, the delta-oxa-analog of arginine, allowing growth on canavanine as sole nitrogen and carbon source. Catalyzes the elimination of hydroxyguanidine from canavanine with a subsequent water addition to yield homoserine. The protein is Canavanine gamma-lyase of Rhizobium leguminosarum bv. trifolii (strain WSM2304).